The chain runs to 521 residues: NAD(P)H-quinone oxidoreductase subunit 2 (521 aa).

The next 14 helical transmembrane spans lie at 16–36, 40–60, 80–100, 110–130, 133–153, 168–188, 212–232, 246–266, 280–300, 308–328, 336–356, 380–400, 402–422, and 468–488; these read ILPE…DLIG, VALA…GLLV, LSII…LMSV, LAEF…LSAA, LVMV…MTGY, LLIG…LYGL, LGLA…ISAV, PTPV…AVAI, WHVI…VVAL, MLAY…VAGS, VFYM…IILF, LGLS…GFFG, IYIF…LGLV, and VGIV…NPLF.

It belongs to the complex I subunit 2 family. As to quaternary structure, NDH-1 can be composed of about 15 different subunits; different subcomplexes with different compositions have been identified which probably have different functions.

It is found in the cellular thylakoid membrane. The catalysed reaction is a plastoquinone + NADH + (n+1) H(+)(in) = a plastoquinol + NAD(+) + n H(+)(out). It catalyses the reaction a plastoquinone + NADPH + (n+1) H(+)(in) = a plastoquinol + NADP(+) + n H(+)(out). Its function is as follows. NDH-1 shuttles electrons from an unknown electron donor, via FMN and iron-sulfur (Fe-S) centers, to quinones in the respiratory and/or the photosynthetic chain. The immediate electron acceptor for the enzyme in this species is believed to be plastoquinone. Couples the redox reaction to proton translocation, and thus conserves the redox energy in a proton gradient. Cyanobacterial NDH-1 also plays a role in inorganic carbon-concentration. The polypeptide is NAD(P)H-quinone oxidoreductase subunit 2 (Synechocystis sp. (strain ATCC 27184 / PCC 6803 / Kazusa)).